The sequence spans 346 residues: MSDADRLITPEKRGEDIDTTLRPQSLDDFTGQAEARANLKVFIEAAKNRGEALDHVLFVGPPGLGKTTLAQIMAKELGVNFKSTSGPVIAKAGDLAALLTNLEERDVLFIDEIHRLNPAVEEILYPAMEDFQLDLIIGEGPAARSVKIDLSKFTLVAATTRLGLLTTPLRDRFGIPVRLAFYTVDELELIVRRGARLMGLNMTDGGAREIARRARGTPRIAGRLLRRVRDFAEVARAEAVTREIADEALTRLLVDNMGLDQLDMRYLTMIAVNFGGGPVGIETIAAGLSEPRDAIEDIIEPYMIQQGFIQRTPRGRILTATAWKHLGLQPPKDLEAAQFRLTLEDD.

Residues 1-16 (MSDADRLITPEKRGED) show a composition bias toward basic and acidic residues. Residues 1-23 (MSDADRLITPEKRGEDIDTTLRP) form a disordered region. Positions 1-182 (MSDADRLITP…FGIPVRLAFY (182 aa)) are large ATPase domain (RuvB-L). ATP-binding positions include L21, R22, G63, K66, T67, T68, 129-131 (EDF), R172, Y182, and R219. T67 is a Mg(2+) binding site. Residues 183-253 (TVDELELIVR…IADEALTRLL (71 aa)) are small ATPAse domain (RuvB-S). Positions 256–346 (NMGLDQLDMR…AQFRLTLEDD (91 aa)) are head domain (RuvB-H). Residues R292, R311, and R316 each coordinate DNA.

This sequence belongs to the RuvB family. In terms of assembly, homohexamer. Forms an RuvA(8)-RuvB(12)-Holliday junction (HJ) complex. HJ DNA is sandwiched between 2 RuvA tetramers; dsDNA enters through RuvA and exits via RuvB. An RuvB hexamer assembles on each DNA strand where it exits the tetramer. Each RuvB hexamer is contacted by two RuvA subunits (via domain III) on 2 adjacent RuvB subunits; this complex drives branch migration. In the full resolvosome a probable DNA-RuvA(4)-RuvB(12)-RuvC(2) complex forms which resolves the HJ.

It is found in the cytoplasm. It catalyses the reaction ATP + H2O = ADP + phosphate + H(+). The RuvA-RuvB-RuvC complex processes Holliday junction (HJ) DNA during genetic recombination and DNA repair, while the RuvA-RuvB complex plays an important role in the rescue of blocked DNA replication forks via replication fork reversal (RFR). RuvA specifically binds to HJ cruciform DNA, conferring on it an open structure. The RuvB hexamer acts as an ATP-dependent pump, pulling dsDNA into and through the RuvAB complex. RuvB forms 2 homohexamers on either side of HJ DNA bound by 1 or 2 RuvA tetramers; 4 subunits per hexamer contact DNA at a time. Coordinated motions by a converter formed by DNA-disengaged RuvB subunits stimulates ATP hydrolysis and nucleotide exchange. Immobilization of the converter enables RuvB to convert the ATP-contained energy into a lever motion, pulling 2 nucleotides of DNA out of the RuvA tetramer per ATP hydrolyzed, thus driving DNA branch migration. The RuvB motors rotate together with the DNA substrate, which together with the progressing nucleotide cycle form the mechanistic basis for DNA recombination by continuous HJ branch migration. Branch migration allows RuvC to scan DNA until it finds its consensus sequence, where it cleaves and resolves cruciform DNA. The chain is Holliday junction branch migration complex subunit RuvB from Agrobacterium fabrum (strain C58 / ATCC 33970) (Agrobacterium tumefaciens (strain C58)).